The primary structure comprises 307 residues: Leucine-rich repeat-containing protein 59 (307 aa).

Met-1 is modified (N-acetylmethionine). The residue at position 2 (Thr-2) is an N-acetylthreonine; in Leucine-rich repeat-containing protein 59, N-terminally processed. Residues 2–244 are Cytoplasmic-facing; it reads TKTGSKGGNL…KPPPRKHNRS (243 aa). LRR repeat units lie at residues 10–31, 40–62, 63–84, 86–107, and 109–128; these read NLRD…NEVP, KATV…CGLT, HLVK…FGRL, NLQH…FAQL, and NLKW…AKVA. Ser-23 and Ser-25 each carry phosphoserine. N6-succinyllysine is present on Lys-73. Lys-135 is modified (N6-acetyllysine). Residues 148–216 adopt a coiled-coil conformation; sequence MKAVQADQER…KASKREQEKK (69 aa). Residues 150–242 are disordered; the sequence is AVQADQERER…PRKPPPRKHN (93 aa). Positions 154–221 are enriched in basic and acidic residues; the sequence is DQERERQRRL…EQEKKPKKET (68 aa). The segment covering 229–242 has biased composition (basic residues); that stretch reads SGSRPRKPPPRKHN. A helical membrane pass occupies residues 245–265; that stretch reads WAVLKGLLLLLLLCVAGGLVV. Over 266-307 the chain is Lumenal; it reads CRVTGLQQQPLCTSVNAIYDNAVQGLRHHEILQWVLQTDSQQ.

As to quaternary structure, can form homodimers. Interacts with SGO1. Interacts with FGF1.

It is found in the microsome membrane. It localises to the endoplasmic reticulum membrane. The protein localises to the nucleus envelope. Functionally, required for nuclear import of FGF1, but not that of FGF2. Might regulate nuclear import of exogenous FGF1 by facilitating interaction with the nuclear import machinery and by transporting cytosolic FGF1 to, and possibly through, the nuclear pores. This Rattus norvegicus (Rat) protein is Leucine-rich repeat-containing protein 59 (Lrrc59).